Consider the following 322-residue polypeptide: NADH-quinone oxidoreductase subunit H (322 aa).

The next 8 membrane-spanning stretches (helical) occupy residues 14-34 (IFMH…YMSF), 81-101 (YIFV…IPVI), 114-134 (VGVL…LLAG), 149-169 (SIAQ…GIVA), 186-206 (LWNI…GMAL), 237-257 (FFIS…TLFF), 265-285 (FPPV…FVLI), and 302-322 (WKFL…YILI).

It belongs to the complex I subunit 1 family. NDH-1 is composed of 13 different subunits. Subunits NuoA, H, J, K, L, M, N constitute the membrane sector of the complex.

The protein resides in the cell inner membrane. The catalysed reaction is a quinone + NADH + 5 H(+)(in) = a quinol + NAD(+) + 4 H(+)(out). In terms of biological role, NDH-1 shuttles electrons from NADH, via FMN and iron-sulfur (Fe-S) centers, to quinones in the respiratory chain. The immediate electron acceptor for the enzyme in this species is believed to be ubiquinone. Couples the redox reaction to proton translocation (for every two electrons transferred, four hydrogen ions are translocated across the cytoplasmic membrane), and thus conserves the redox energy in a proton gradient. This subunit may bind ubiquinone. This Blochmanniella floridana protein is NADH-quinone oxidoreductase subunit H.